Consider the following 241-residue polypeptide: UPF0280 protein MK0206 (241 aa).

Belongs to the UPF0280 family.

The protein is UPF0280 protein MK0206 of Methanopyrus kandleri (strain AV19 / DSM 6324 / JCM 9639 / NBRC 100938).